A 196-amino-acid chain; its full sequence is ATP-dependent Clp protease proteolytic subunit (196 aa).

The active-site Nucleophile is Ser-101. Residue His-126 is part of the active site.

It belongs to the peptidase S14 family. As to quaternary structure, component of the chloroplastic Clp protease core complex.

The protein localises to the plastid. Its subcellular location is the chloroplast stroma. It carries out the reaction Hydrolysis of proteins to small peptides in the presence of ATP and magnesium. alpha-casein is the usual test substrate. In the absence of ATP, only oligopeptides shorter than five residues are hydrolyzed (such as succinyl-Leu-Tyr-|-NHMec, and Leu-Tyr-Leu-|-Tyr-Trp, in which cleavage of the -Tyr-|-Leu- and -Tyr-|-Trp bonds also occurs).. Functionally, cleaves peptides in various proteins in a process that requires ATP hydrolysis. Has a chymotrypsin-like activity. Plays a major role in the degradation of misfolded proteins. The chain is ATP-dependent Clp protease proteolytic subunit from Vitis vinifera (Grape).